A 161-amino-acid chain; its full sequence is V-type proton ATPase 16 kDa proteolipid subunit c (161 aa).

Residues 1–15 are Lumenal-facing; that stretch reads MSYDLATAERAAYAP. Residues 16–36 form a helical membrane-spanning segment; sequence FFGYMGAASAQIFTVLGAAYG. At 37–58 the chain is on the cytoplasmic side; it reads TAKSAVGISSMGVMRPELIMKS. A helical transmembrane segment spans residues 59 to 79; that stretch reads VIPVIMAGIIGIYGLVVAMVL. At 80–98 the chain is on the lumenal side; sequence RGKVTSASAGYTLDKGFAH. Residues 99–119 form a helical membrane-spanning segment; sequence LAAGLTCGLCGLGAGYAIGIV. Topologically, residues 120–137 are cytoplasmic; the sequence is GDAGVRGTAQQPRLFVGM. The helical transmembrane segment at 138-158 threads the bilayer; it reads ILILIFSEVLGLYGMIVALIL. Topologically, residues 159-161 are lumenal; sequence GTS.

Belongs to the V-ATPase proteolipid subunit family. In terms of assembly, V-ATPase is a heteromultimeric enzyme made up of two complexes: the ATP-hydrolytic V1 complex and the proton translocation V0 complex. The V1 complex consists of three catalytic AB heterodimers that form a heterohexamer, three peripheral stalks each consisting of EG heterodimers, one central rotor including subunits D and F, and the regulatory subunits C and H. The proton translocation complex V0 consists of the proton transport subunit a, a ring of proteolipid subunits c9c'', rotary subunit d, subunits e and f, and the accessory subunits vah-19/Ac45 and vah-20/PRR.

It localises to the membrane. Functionally, proton-conducting pore forming subunit of the V0 complex of vacuolar(H+)-ATPase (V-ATPase), a multisubunit enzyme composed of a peripheral complex (V1) that hydrolyzes ATP and a membrane integral complex (V0) that translocates protons. V-ATPase is responsible for acidifying and maintaining the pH of intracellular compartments and in some cell types, is targeted to the plasma membrane, where it is responsible for acidifying the extracellular environment. The sequence is that of V-type proton ATPase 16 kDa proteolipid subunit c (12) from Ascaris suum (Pig roundworm).